Consider the following 443-residue polypeptide: Glucose-6-phosphate isomerase (443 aa).

The Proton donor role is filled by glutamate 285. Active-site residues include histidine 306 and lysine 420.

Belongs to the GPI family.

It localises to the cytoplasm. It catalyses the reaction alpha-D-glucose 6-phosphate = beta-D-fructose 6-phosphate. It functions in the pathway carbohydrate biosynthesis; gluconeogenesis. The protein operates within carbohydrate degradation; glycolysis; D-glyceraldehyde 3-phosphate and glycerone phosphate from D-glucose: step 2/4. Catalyzes the reversible isomerization of glucose-6-phosphate to fructose-6-phosphate. This Staphylococcus aureus (strain bovine RF122 / ET3-1) protein is Glucose-6-phosphate isomerase.